Reading from the N-terminus, the 121-residue chain is Large ribosomal subunit protein uL14 (121 aa).

Belongs to the universal ribosomal protein uL14 family. In terms of assembly, part of the 50S ribosomal subunit. Forms a cluster with proteins L3 and L19. In the 70S ribosome, L14 and L19 interact and together make contacts with the 16S rRNA in bridges B5 and B8.

Functionally, binds to 23S rRNA. Forms part of two intersubunit bridges in the 70S ribosome. This is Large ribosomal subunit protein uL14 from Parabacteroides distasonis (strain ATCC 8503 / DSM 20701 / CIP 104284 / JCM 5825 / NCTC 11152).